Reading from the N-terminus, the 1240-residue chain is DNA polymerase catalytic subunit (1240 aa).

The segment covering M1–P26 has biased composition (low complexity). Disordered regions lie at residues M1–R65, G646–G695, and A1103–P1139. Residues N44 to Q56 are compositionally biased toward polar residues. Acidic residues predominate over residues N669 to E688.

The protein belongs to the DNA polymerase type-B family. As to quaternary structure, forms a complex with the ssDNA-binding protein UL29, the DNA polymerase processivity factor, and the alkaline exonuclease. Interacts with the putative helicase-primase complex subunit UL8; this interaction may coordinate leading and lagging strand DNA synthesis at the replication fork.

Its subcellular location is the host nucleus. The enzyme catalyses DNA(n) + a 2'-deoxyribonucleoside 5'-triphosphate = DNA(n+1) + diphosphate. The catalysed reaction is Endonucleolytic cleavage to 5'-phosphomonoester.. Its function is as follows. Replicates viral genomic DNA. The replication complex is composed of six viral proteins: the DNA polymerase, processivity factor, primase, primase-associated factor, helicase, and ssDNA-binding protein. Additionally, the polymerase contains an intrinsic ribonuclease H (RNase H) activity that specifically degrades RNA/DNA heteroduplexes or duplex DNA substrates in the 5' to 3' direction. Therefore, it can catalyze the excision of the RNA primers that initiate the synthesis of Okazaki fragments at a replication fork during viral DNA replication. This Human herpesvirus 2 (strain 186) (HHV-2) protein is DNA polymerase catalytic subunit.